The chain runs to 471 residues: Arginine biosynthesis bifunctional protein ArgJ, mitochondrial (471 aa).

Substrate-binding residues include Thr-190, Lys-216, Thr-239, Glu-327, Asn-466, and Ser-471. Thr-239 acts as the Nucleophile in catalysis.

This sequence belongs to the ArgJ family. In terms of assembly, heterodimer of an alpha and a beta chain. The alpha and beta chains are autoproteolytically processed from a single precursor protein within the mitochondrion.

It localises to the mitochondrion matrix. It catalyses the reaction N(2)-acetyl-L-ornithine + L-glutamate = N-acetyl-L-glutamate + L-ornithine. The enzyme catalyses L-glutamate + acetyl-CoA = N-acetyl-L-glutamate + CoA + H(+). It functions in the pathway amino-acid biosynthesis; L-arginine biosynthesis; L-ornithine and N-acetyl-L-glutamate from L-glutamate and N(2)-acetyl-L-ornithine (cyclic): step 1/1. It participates in amino-acid biosynthesis; L-arginine biosynthesis; N(2)-acetyl-L-ornithine from L-glutamate: step 1/4. Functionally, catalyzes two activities which are involved in the cyclic version of arginine biosynthesis: the synthesis of acetylglutamate from glutamate and acetyl-CoA, and of ornithine by transacetylation between acetylornithine and glutamate. This is Arginine biosynthesis bifunctional protein ArgJ, mitochondrial from Coprinopsis cinerea (strain Okayama-7 / 130 / ATCC MYA-4618 / FGSC 9003) (Inky cap fungus).